A 619-amino-acid chain; its full sequence is MHSDTNGRTKSNNSPSDNNPNETVILIDSDKEEDASIREANLPVRLYPDRRVGRRRDALNRFVRSDSRSRNSQRTHITASSERPDFQANNDDITIIREVGRFFGDDGPIDPSAHYVDLDQEPGSETLETPRTIQVDNTNGYLNDNGNNNESDDGLTIVEERTTRPRVTLNLPGGERLEVTATTTDIPIRRSFEFQEDLGASRRQLLRRSATRARNLFVDRSDENDEDWTDDTHNLPEAIQRARRESRMRMSRRIAERQRRVQQQRVSSDENISTSIRLQSIRERIQSYTPDIRSAFHRAESLHEFRSILQNVAPITLQECEEELMALFTEFRNQLLQNWAIDRVRNTQEEALRLHREALERQERTAGRVFHRGTLRESITNYLNFNGEDGFLSRLWSGPALSDADEERHTQNIIDMIQEREERERDVVMKNLMNKTRAQQEEFEARAASLPEGYSASFDTTPKMKLDITKNGKEETIIVTDDDLAKTLEDIPVCCLCGAELGVGIPDDFTGISQKDRGVSFEGLVSKYKFHCPYQTLARPSMLDRDLSKRTFIASCGHAFCGRCFARIDNAKKKSKMPKKKLAQLKGSAHPDNYGPKLCPADSCKKLIRSRGRLKEVYF.

The interval 1–23 is disordered; it reads MHSDTNGRTKSNNSPSDNNPNET. Residues 11-21 show a composition bias toward low complexity; it reads SNNSPSDNNPN. Phosphoserine occurs at positions 14 and 29. The interval 63 to 90 is disordered; that stretch reads VRSDSRSRNSQRTHITASSERPDFQANN. Positions 70–90 are enriched in polar residues; it reads RNSQRTHITASSERPDFQANN. The tract at residues 201–335 is EUC1 interaction domain; that stretch reads SRRQLLRRSA…ALFTEFRNQL (135 aa).

In terms of assembly, component of the heterodimeric SUMO-targeted ubiquitin ligase (STUbL) complex composed of SLX5 and SLX8. Interacts with sirtuin SIR2. Interacts with KAR9. Interacts with EUC1.

It localises to the nucleus. The protein localises to the chromosome. Its subcellular location is the centromere. The protein resides in the kinetochore. It carries out the reaction S-ubiquitinyl-[E2 ubiquitin-conjugating enzyme]-L-cysteine + [acceptor protein]-L-lysine = [E2 ubiquitin-conjugating enzyme]-L-cysteine + N(6)-ubiquitinyl-[acceptor protein]-L-lysine.. It functions in the pathway protein modification; protein ubiquitination. Its function is as follows. Component of the SUMO-targeted ubiquitin ligase (STUbL) complex SLX5/SLX8 that mediates ubiquitination and subsequent desumoylation of sumoylated proteins and proteins containing SUMO-like domains for their degradation. The STUbL complex SLX5/SLX8 stimulates ubiquitin conjugating enzymes, including UBC1, UBC4, UBC5 and UBC13-MMS2, and mediates the proteolytic down-regulation of sumoylated proteins. The STUbL complex SLX5/SLX8 is involved in ubiquitin-mediated degradation of histone variant CSE4, preventing mislocalization to euchromatin. The complex plays an essential role in maintenance of chromosome stability and links SUMO-dependent ubiquitination to a centromere-specific function during mitosis. The complex is involved in proteolysis of spindle positioning protein KAR9 and ensures correct spindle function by regulating levels of microtubule-associated proteins. During replication, the complex helps prevent DNA lesions via recombination and has a role in localizing the DNA damage protein DCD2. The complex especially ubiquitinates the nuclease YEN1 and prevents persistent accumulation of a fraction of YEN1 associated with sites of activity in late G2/M and helps maintain the balance between pro- and anti-crossover pathways during homologous recombination. It is also involved in ubiquitin-mediated degradation of DNA repair proteins RAD52 and RAD57. Along with SIR2, promotes silencing of genes at telomeric or ribosomal DNA (rDNA) loci. Finally, the complex is recruited to distinct genomic hotspots of non-H2B protein ubiquitination (ub-hotspots) by the sumoylated transcription factor-like protein EUC1 where it ubiquitinates EUC1 and presumably other targets. This chain is E3 ubiquitin-protein ligase complex SLX5-SLX8 subunit SLX5 (SLX5), found in Saccharomyces cerevisiae (strain ATCC 204508 / S288c) (Baker's yeast).